A 107-amino-acid chain; its full sequence is EPIDERMAL PATTERNING FACTOR-like protein 3 (107 aa).

Residues methionine 1–alanine 24 form the signal peptide. 3 disulfide bridges follow: cysteine 64–cysteine 102, cysteine 68–cysteine 74, and cysteine 71–cysteine 104.

This sequence belongs to the plant cysteine rich small secretory peptide family. Epidermal patterning factor subfamily.

The protein resides in the secreted. In terms of biological role, controls stomatal patterning. The chain is EPIDERMAL PATTERNING FACTOR-like protein 3 from Arabidopsis thaliana (Mouse-ear cress).